A 149-amino-acid polypeptide reads, in one-letter code: UPF0179 protein Mbar_A0292 (149 aa).

It belongs to the UPF0179 family.

The polypeptide is UPF0179 protein Mbar_A0292 (Methanosarcina barkeri (strain Fusaro / DSM 804)).